A 276-amino-acid polypeptide reads, in one-letter code: MATYFVGDLQGCYDELQRLLEKVRFDPTQDLLYLVGDLVARGDKSLECLRLVKSLGKSAQTVLGNHDLHLLATAFGIKKVKSRDRVDAIFHAEDFEELIHWLRHQPLLVYNAKQNWVMTHAGISPDWDINTAQACAKEVENVLQQGDYCHLLSQMYDSRPDLWSADLTGIERLRYIINVFTRMRFCYRDHRLDFDCKSPVDKAPEELTPWFNLSNPLYKQVDIIFGHWASLVDTPTPHHIYALDTGCVWNNRMTMLRWEDKQYFCQPALKDYAFNG.

The protein belongs to the Ap4A hydrolase family.

The catalysed reaction is P(1),P(4)-bis(5'-adenosyl) tetraphosphate + H2O = 2 ADP + 2 H(+). Functionally, hydrolyzes diadenosine 5',5'''-P1,P4-tetraphosphate to yield ADP. This Mannheimia succiniciproducens (strain KCTC 0769BP / MBEL55E) protein is Bis(5'-nucleosyl)-tetraphosphatase, symmetrical.